We begin with the raw amino-acid sequence, 56 residues long: Small ribosomal subunit protein uS14 (56 aa).

Residues Cys21, Cys24, Cys39, and Cys42 each coordinate Zn(2+).

This sequence belongs to the universal ribosomal protein uS14 family. As to quaternary structure, component of the 40S small ribosomal subunit. The cofactor is Zn(2+).

The protein localises to the cytoplasm. It localises to the cytosol. The protein resides in the rough endoplasmic reticulum. This chain is Small ribosomal subunit protein uS14 (RpS29), found in Drosophila melanogaster (Fruit fly).